Reading from the N-terminus, the 453-residue chain is uncharacterized protein (453 aa).

2 disordered regions span residues 140–161 (YGES…TRPQ) and 311–332 (TTTR…SASS).

This is an uncharacterized protein from Caenorhabditis elegans.